A 590-amino-acid chain; its full sequence is Methionine--tRNA ligase, mitochondrial (590 aa).

Residues 1 to 26 (MRTRFLFLTSGCKAVPELHKIVLANA) constitute a mitochondrion transit peptide. The short motif at 51–61 (FYVNASPHLGH) is the 'HIGH' region element. The 'KMSKS' region signature appears at 342-346 (KMSKS). K345 contributes to the ATP binding site. Residues 570-590 (LESQRADQQKNRKMEKGSNLK) are disordered. Residues 571-590 (ESQRADQQKNRKMEKGSNLK) are compositionally biased toward basic and acidic residues.

The protein belongs to the class-I aminoacyl-tRNA synthetase family.

The protein resides in the mitochondrion matrix. It carries out the reaction tRNA(Met) + L-methionine + ATP = L-methionyl-tRNA(Met) + AMP + diphosphate. The sequence is that of Methionine--tRNA ligase, mitochondrial (mars2) from Takifugu rubripes (Japanese pufferfish).